The following is a 252-amino-acid chain: Auxin-induced in root cultures protein 12 (252 aa).

The signal sequence occupies residues 1-25; that stretch reads MASSSSSLLILAVACFVSLISPAIS. Positions 49-165 constitute a DOMON domain; that stretch reads LNSYLHYTYN…DSVNQVWQIG (117 aa). N-linked (GlcNAc...) asparagine glycosylation is found at N58 and N61. M91 provides a ligand contact to heme. N-linked (GlcNAc...) asparagine glycans are attached at residues N114 and N167. H176 contributes to the heme binding site. The segment at 193-224 is disordered; sequence EDAAPGSAPSPGSAPAPGTSGSTTPGTAAGGP. The segment covering 195–219 has biased composition (low complexity); it reads AAPGSAPSPGSAPAPGTSGSTTPGT. N226 carries GPI-anchor amidated asparagine lipidation. Residues 227-252 constitute a propeptide, removed in mature form; it reads AGSLTRNVNFGVNLGILVLLGSIFIF.

Heme serves as cofactor.

The protein localises to the cell membrane. Its function is as follows. One-heme-containing cytochrome. This is Auxin-induced in root cultures protein 12 (AIR12) from Arabidopsis thaliana (Mouse-ear cress).